Consider the following 360-residue polypeptide: Peptide chain release factor 1 (360 aa).

Gln235 carries the N5-methylglutamine modification. A compositionally biased stretch (basic and acidic residues) spans 284-293 (ARRQQEESST). The tract at residues 284-314 (ARRQQEESSTRRNLLGSGDRSDRNRTYNFPQ) is disordered.

This sequence belongs to the prokaryotic/mitochondrial release factor family. In terms of processing, methylated by PrmC. Methylation increases the termination efficiency of RF1.

Its subcellular location is the cytoplasm. In terms of biological role, peptide chain release factor 1 directs the termination of translation in response to the peptide chain termination codons UAG and UAA. The chain is Peptide chain release factor 1 from Erwinia tasmaniensis (strain DSM 17950 / CFBP 7177 / CIP 109463 / NCPPB 4357 / Et1/99).